A 79-amino-acid polypeptide reads, in one-letter code: U24-theraphotoxin-Cg1a (79 aa).

An N-terminal signal peptide occupies residues 1–19 (MRVLFIIAVLALISVGCYA). The propeptide occupies 20-44 (SEMKDRSSRNEVLSAIFAIEEPQER). Intrachain disulfides connect cysteine 46–cysteine 61, cysteine 53–cysteine 66, and cysteine 60–cysteine 73. Position 78 is a tryptophan amide (tryptophan 78).

It belongs to the neurotoxin 10 (Hwtx-1) family. 35 (Jztx-27) subfamily. In terms of tissue distribution, expressed by the venom gland.

The protein localises to the secreted. Its function is as follows. Probable ion channel inhibitor. This chain is U24-theraphotoxin-Cg1a, found in Chilobrachys guangxiensis (Chinese earth tiger tarantula).